We begin with the raw amino-acid sequence, 291 residues long: Methionine aminopeptidase (291 aa).

Histidine 65 contributes to the substrate binding site. The a divalent metal cation site is built by aspartate 85, aspartate 96, and histidine 155. Substrate is bound at residue histidine 163. Residues glutamate 188 and glutamate 276 each contribute to the a divalent metal cation site.

The protein belongs to the peptidase M24A family. Methionine aminopeptidase archaeal type 2 subfamily. As to quaternary structure, monomer. The cofactor is Co(2+). Zn(2+) serves as cofactor. Mn(2+) is required as a cofactor. It depends on Fe(2+) as a cofactor.

It carries out the reaction Release of N-terminal amino acids, preferentially methionine, from peptides and arylamides.. Removes the N-terminal methionine from nascent proteins. The N-terminal methionine is often cleaved when the second residue in the primary sequence is small and uncharged (Met-Ala-, Cys, Gly, Pro, Ser, Thr, or Val). This Archaeoglobus fulgidus (strain ATCC 49558 / DSM 4304 / JCM 9628 / NBRC 100126 / VC-16) protein is Methionine aminopeptidase.